A 184-amino-acid polypeptide reads, in one-letter code: ATP synthase subunit b, chloroplastic (184 aa).

The helical transmembrane segment at 27–49 (LATNPINLSVVLGVLIFFGKGVL) threads the bilayer.

The protein belongs to the ATPase B chain family. As to quaternary structure, F-type ATPases have 2 components, F(1) - the catalytic core - and F(0) - the membrane proton channel. F(1) has five subunits: alpha(3), beta(3), gamma(1), delta(1), epsilon(1). F(0) has four main subunits: a(1), b(1), b'(1) and c(10-14). The alpha and beta chains form an alternating ring which encloses part of the gamma chain. F(1) is attached to F(0) by a central stalk formed by the gamma and epsilon chains, while a peripheral stalk is formed by the delta, b and b' chains.

Its subcellular location is the plastid. The protein localises to the chloroplast thylakoid membrane. F(1)F(0) ATP synthase produces ATP from ADP in the presence of a proton or sodium gradient. F-type ATPases consist of two structural domains, F(1) containing the extramembraneous catalytic core and F(0) containing the membrane proton channel, linked together by a central stalk and a peripheral stalk. During catalysis, ATP synthesis in the catalytic domain of F(1) is coupled via a rotary mechanism of the central stalk subunits to proton translocation. Its function is as follows. Component of the F(0) channel, it forms part of the peripheral stalk, linking F(1) to F(0). This Cuscuta exaltata (Tall dodder) protein is ATP synthase subunit b, chloroplastic.